The primary structure comprises 316 residues: BTB/POZ domain-containing adapter for CUL3-mediated RhoA degradation protein 2 (316 aa).

In terms of domain architecture, BTB spans 28–96 (KYVQLNVGGS…LRDDTITLPQ (69 aa)). The segment covering 268–279 (EATSRSRSQASP) has biased composition (polar residues). The tract at residues 268 to 288 (EATSRSRSQASPSEDEDTFEL) is disordered. Ser-278 carries the post-translational modification Phosphoserine. Ser-280 carries the post-translational modification Phosphoserine; by CK2.

The protein belongs to the BACURD family. In terms of assembly, component of the BCR(TNFAIP1) E3 ubiquitin ligase complex, at least composed of CUL3, TNFAIP1/BACURD2 and RBX1. Interacts with RHOA; with a preference for RhoA-GDP. Interacts with RHOB. Interacts with PCNA. Interacts with CSNK2B. Phosphorylation at Ser-280 by CK2 facilitates the nucleus localization and increases interaction with PCNA.

Its subcellular location is the cytoplasm. It localises to the nucleus. The protein localises to the endosome. It participates in protein modification; protein ubiquitination. Substrate-specific adapter of a BCR (BTB-CUL3-RBX1) E3 ubiquitin-protein ligase complex involved in regulation of cytoskeleton structure. The BCR(TNFAIP1) E3 ubiquitin ligase complex mediates the ubiquitination of RHOA, leading to its degradation by the proteasome, thereby regulating the actin cytoskeleton and cell migration. Its interaction with RHOB may regulate apoptosis. May enhance the PCNA-dependent DNA polymerase delta activity. This Mus musculus (Mouse) protein is BTB/POZ domain-containing adapter for CUL3-mediated RhoA degradation protein 2 (Tnfaip1).